A 689-amino-acid polypeptide reads, in one-letter code: Glycine--tRNA ligase beta subunit (689 aa).

This sequence belongs to the class-II aminoacyl-tRNA synthetase family. As to quaternary structure, tetramer of two alpha and two beta subunits.

Its subcellular location is the cytoplasm. It catalyses the reaction tRNA(Gly) + glycine + ATP = glycyl-tRNA(Gly) + AMP + diphosphate. The protein is Glycine--tRNA ligase beta subunit of Dictyoglomus thermophilum (strain ATCC 35947 / DSM 3960 / H-6-12).